Here is a 118-residue protein sequence, read N- to C-terminus: Small ribosomal subunit protein uS13 (118 aa).

The disordered stretch occupies residues 93-118 (RNLPVRGQNTKNNARTRKGPTRPLKR). Residues 106–118 (ARTRKGPTRPLKR) are compositionally biased toward basic residues.

Belongs to the universal ribosomal protein uS13 family. In terms of assembly, part of the 30S ribosomal subunit. Forms a loose heterodimer with protein S19. Forms two bridges to the 50S subunit in the 70S ribosome.

Its function is as follows. Located at the top of the head of the 30S subunit, it contacts several helices of the 16S rRNA. In the 70S ribosome it contacts the 23S rRNA (bridge B1a) and protein L5 of the 50S subunit (bridge B1b), connecting the 2 subunits; these bridges are implicated in subunit movement. Contacts the tRNAs in the A and P-sites. This Psychrobacter cryohalolentis (strain ATCC BAA-1226 / DSM 17306 / VKM B-2378 / K5) protein is Small ribosomal subunit protein uS13.